A 76-amino-acid polypeptide reads, in one-letter code: Small ribosomal subunit protein bS16 (76 aa).

It belongs to the bacterial ribosomal protein bS16 family.

This Helicobacter pylori (strain P12) protein is Small ribosomal subunit protein bS16.